We begin with the raw amino-acid sequence, 898 residues long: Vacuolar protein sorting-associated protein 41 homolog (898 aa).

The segment covering 1-10 has biased composition (basic and acidic residues); that stretch reads MDESNDKENE. The interval 1–35 is disordered; the sequence is MDESNDKENEFGDSFLEDSGDITRTTEDEDEAPLE. Residues 614–756 form a CHCR repeat; sequence LRLLLDNADS…VADFPTHFSQ (143 aa). The RING-type; atypical zinc-finger motif lies at 835–890; sequence CSLCSQVIMNTGQDMIPRKFNDIKVFKCGHIFHLTCSASEIDRRQMIEDGICIACS.

This sequence belongs to the VPS41 family. As to quaternary structure, probable component of the homotypic fusion and vacuole protein sorting (HOPS) complex consisting of the core class C Vps proteins vps-11, vps-16, vps-18, and which further associates with vps-33.1, vps-39 and vps-41.

The protein localises to the endosome membrane. The protein resides in the late endosome. It localises to the lysosome. It is found in the golgi apparatus. Its subcellular location is the trans-Golgi network. The protein localises to the early endosome. The protein resides in the cytoplasmic vesicle. It localises to the clathrin-coated vesicle. In terms of biological role, plays a role in vesicle-mediated protein trafficking to lysosomal compartments including the endocytic membrane transport pathways. Believed to act in part as a core component of the putative HOPS endosomal tethering complex which is proposed to be involved in the rab-5-to-rab-7 endosome conversion probably implicating sand-1, and via binding SNAREs and SNARE complexes to mediate tethering and docking events during SNARE-mediated membrane fusion. The HOPS complex is proposed to be recruited to rab-7 on the late endosomal membrane and to regulate late endocytic, phagocytic and autophagic traffic towards lysosomes. Within the HOPS complex, contributes to the normal development of gut granules in the adult intestine. May mediate the tethering of autophagosomes with lysosomes. Has a role in the negative regulation of apoptosis. Required for uptake of exogenous dsRNA which is used in experimental RNA silencing. In Caenorhabditis briggsae, this protein is Vacuolar protein sorting-associated protein 41 homolog.